Here is a 540-residue protein sequence, read N- to C-terminus: Chaperonin GroEL 4 (540 aa).

Residues 29–32 (TLGP), 86–90 (DGTTT), glycine 413, 477–479 (NAA), and aspartate 493 contribute to the ATP site.

It belongs to the chaperonin (HSP60) family. Forms a cylinder of 14 subunits composed of two heptameric rings stacked back-to-back. Interacts with the co-chaperonin GroES.

It localises to the cytoplasm. The enzyme catalyses ATP + H2O + a folded polypeptide = ADP + phosphate + an unfolded polypeptide.. In terms of biological role, together with its co-chaperonin GroES, plays an essential role in assisting protein folding. The GroEL-GroES system forms a nano-cage that allows encapsulation of the non-native substrate proteins and provides a physical environment optimized to promote and accelerate protein folding. The protein is Chaperonin GroEL 4 of Frankia casuarinae (strain DSM 45818 / CECT 9043 / HFP020203 / CcI3).